The primary structure comprises 336 residues: Ornithine carbamoyltransferase, catabolic (336 aa).

Carbamoyl phosphate-binding positions include 57–60 (STRT), Q84, R108, and 135–138 (HPTQ). Residues N169, D233, and 237–238 (SM) contribute to the L-ornithine site. Residues 275 to 276 (CL) and R322 each bind carbamoyl phosphate.

It belongs to the aspartate/ornithine carbamoyltransferase superfamily. OTCase family.

It is found in the cytoplasm. The enzyme catalyses carbamoyl phosphate + L-ornithine = L-citrulline + phosphate + H(+). It participates in amino-acid degradation; L-arginine degradation via ADI pathway; carbamoyl phosphate from L-arginine: step 2/2. Reversibly catalyzes the transfer of the carbamoyl group from carbamoyl phosphate (CP) to the N(epsilon) atom of ornithine (ORN) to produce L-citrulline. This is Ornithine carbamoyltransferase, catabolic from Photobacterium profundum (strain SS9).